We begin with the raw amino-acid sequence, 416 residues long: Xyloglucan O-acetyltransferase 1 (416 aa).

Residues 1–14 are Cytoplasmic-facing; it reads MGLNEQQNVPSQRK. A helical; Signal-anchor for type II membrane protein transmembrane segment spans residues 15–35; the sequence is IIVFIVLAFIPIALFRLCFNN. Over 36-416 the chain is Lumenal; it reads PFSSIKDTSL…MIEMLRRWKV (381 aa). 4 disulfides stabilise this stretch: Cys79–Cys129, Cys100–Cys165, Cys109–Cys395, and Cys318–Cys391. Residue Asn96 is glycosylated (N-linked (GlcNAc...) asparagine). The GDS motif signature appears at 152 to 154; it reads GDS. Residue Ser154 is the Nucleophile of the active site. Residues Asn194, Asn269, and Asn319 are each glycosylated (N-linked (GlcNAc...) asparagine). Catalysis depends on Asp390, which acts as the Proton donor. A DXXH motif motif is present at residues 390–393; that stretch reads DCLH. The active-site Proton acceptor is the His393.

Belongs to the PC-esterase family. TBL subfamily.

It localises to the golgi apparatus membrane. Xyloglucan acetyltransferase that catalyzes the acetylation of fucosylated Gal residues on xyloglucan side chains. Predominantly catalyze 6-O-monoacetylation of Gal residues in the Fuc-Gal-Xyl trisaccharide side chains of xyloglucan oligomers. Involved in xyloglucan specific O-acetylation in roots and rosette leaves. In Arabidopsis thaliana (Mouse-ear cress), this protein is Xyloglucan O-acetyltransferase 1.